Reading from the N-terminus, the 878-residue chain is Phosphoenolpyruvate carboxylase (878 aa).

Residues H140 and K545 contribute to the active site.

It belongs to the PEPCase type 1 family. Mg(2+) serves as cofactor.

It catalyses the reaction oxaloacetate + phosphate = phosphoenolpyruvate + hydrogencarbonate. In terms of biological role, forms oxaloacetate, a four-carbon dicarboxylic acid source for the tricarboxylic acid cycle. This Pseudomonas paraeruginosa (strain DSM 24068 / PA7) (Pseudomonas aeruginosa (strain PA7)) protein is Phosphoenolpyruvate carboxylase.